The sequence spans 700 residues: MNKGWLELESDPGLFTLLVEDFGVKGVQVEEIYDLQSKCQGPVYGFIFLFKWIEESRSRRKVSTLVDETSVIDDDIVNNMFFAHQLIPNSCATHALLSVLLNCNNVDLGPTLSRMKDFTKGFSPESKGYAIGNAPELAKARNSHARPEPRHLPEKQNGISAVRTMEAFHFVSYVPIKGRLFELDGLKVYPIDHGPWADDEEWTDKARRVIMERIGLATAGEPYHDIRFNLMAVVPDRRMKYESKLHILKMNRQTVLEALQQLIRVTQPELIQSQKSQESQSPEEAKPANSKTVAPESTHPDGADEPASQGHTTATQSPPTKSKPVAKASASSINGVPPANPNPIVQRLPAFLDNHNYAKSPMQEEEDLAAGVGRSRVPVRQHQQYSDDEDDYDDDEEEEVRNTNSAIRYKRKGQVKQEHAAGAADGQLSVLQPNTINVLAEKLKESQKDLSIPLSIKTTGGGAAVAIVTHSQPSPTPSNESTDTASEIGSAFNSPLRSPIRSANPTRPSSPVTSHISKVLFGEEDGLLRIDCLRYNRAVRDLGPIISSGLLHLTEDGVFCPLAAADGGKSSPPSIKPGEEAQVTIKLDEKEGSEASGSKEKELLALLKCVEAEIANYEACLKEEVEKRKKFKIDDQRRTHNYDEFICTFISMLAQEGMLASLVEQNISVRRRQGVSIGRLHKQRKPDRRKRSRPYKAKRQ.

The UCH catalytic domain occupies 4-235 (GWLELESDPG…IRFNLMAVVP (232 aa)). The active-site Nucleophile is the Cys-91. His-169 functions as the Proton donor in the catalytic mechanism. 2 stretches are compositionally biased toward low complexity: residues 273 to 282 (SQKSQESQSP) and 317 to 332 (SPPT…SASS). 3 disordered regions span residues 273–346 (SQKS…PIVQ), 363–405 (QEEE…NTNS), and 469–513 (THSQ…SPVT). A compositionally biased stretch (acidic residues) spans 386–399 (SDDEDDYDDDEEEE). Positions 598–632 (SKEKELLALLKCVEAEIANYEACLKEEVEKRKKFK) form a coiled coil. Residues 641–669 (NYDEFICTFISMLAQEGMLASLVEQNISV) form the ULD domain. The tract at residues 674-700 (GVSIGRLHKQRKPDRRKRSRPYKAKRQ) is disordered. The short motif at 688 to 693 (RRKRSR) is the Nuclear localization signal element.

Belongs to the peptidase C12 family. BAP1 subfamily. As to quaternary structure, component of the PR-DUB complex.

It localises to the cytoplasm. Its subcellular location is the nucleus. It catalyses the reaction Thiol-dependent hydrolysis of ester, thioester, amide, peptide and isopeptide bonds formed by the C-terminal Gly of ubiquitin (a 76-residue protein attached to proteins as an intracellular targeting signal).. Deubiquitinating enzyme that plays a key role in chromatin by mediating deubiquitination of histone H2A. Catalytic component of the PR-DUB complex, a complex that specifically mediates deubiquitination of histone H2A monoubiquitinated at 'Lys-119' (H2AK119ub1). The polypeptide is Ubiquitin carboxyl-terminal hydrolase BAP1 (BAP1) (Gallus gallus (Chicken)).